The following is a 429-amino-acid chain: Serine--tRNA ligase (429 aa).

235–237 serves as a coordination point for L-serine; it reads TAE. 266 to 268 is a binding site for ATP; it reads RSE. Glutamate 289 serves as a coordination point for L-serine. 353–356 is a binding site for ATP; it reads EISS. Serine 389 lines the L-serine pocket.

The protein belongs to the class-II aminoacyl-tRNA synthetase family. Type-1 seryl-tRNA synthetase subfamily. Homodimer. The tRNA molecule binds across the dimer.

The protein resides in the cytoplasm. The catalysed reaction is tRNA(Ser) + L-serine + ATP = L-seryl-tRNA(Ser) + AMP + diphosphate + H(+). The enzyme catalyses tRNA(Sec) + L-serine + ATP = L-seryl-tRNA(Sec) + AMP + diphosphate + H(+). It functions in the pathway aminoacyl-tRNA biosynthesis; selenocysteinyl-tRNA(Sec) biosynthesis; L-seryl-tRNA(Sec) from L-serine and tRNA(Sec): step 1/1. Its function is as follows. Catalyzes the attachment of serine to tRNA(Ser). Is also able to aminoacylate tRNA(Sec) with serine, to form the misacylated tRNA L-seryl-tRNA(Sec), which will be further converted into selenocysteinyl-tRNA(Sec). The protein is Serine--tRNA ligase of Haemophilus influenzae (strain PittEE).